The following is a 782-amino-acid chain: E3 UFM1-protein ligase 1 homolog (782 aa).

A disordered region spans residues 405 to 478 (VSTQELEDDG…TRGGGGASKK (74 aa)).

This sequence belongs to the UFL1 family.

Its function is as follows. E3 UFM1-protein ligase that mediates ufmylation of target proteins. The polypeptide is E3 UFM1-protein ligase 1 homolog (Drosophila simulans (Fruit fly)).